Here is a 131-residue protein sequence, read N- to C-terminus: Large ribosomal subunit protein bL12 (131 aa).

Belongs to the bacterial ribosomal protein bL12 family. As to quaternary structure, homodimer. Part of the ribosomal stalk of the 50S ribosomal subunit. Forms a multimeric L10(L12)X complex, where L10 forms an elongated spine to which 2 to 4 L12 dimers bind in a sequential fashion. Binds GTP-bound translation factors.

Its function is as follows. Forms part of the ribosomal stalk which helps the ribosome interact with GTP-bound translation factors. Is thus essential for accurate translation. This is Large ribosomal subunit protein bL12 from Prochlorococcus marinus subsp. pastoris (strain CCMP1986 / NIES-2087 / MED4).